The primary structure comprises 309 residues: 4-hydroxy-3-methylbut-2-enyl diphosphate reductase (309 aa).

[4Fe-4S] cluster is bound at residue C12. Residues H41 and H74 each coordinate (2E)-4-hydroxy-3-methylbut-2-enyl diphosphate. Dimethylallyl diphosphate is bound by residues H41 and H74. Residues H41 and H74 each coordinate isopentenyl diphosphate. C96 contributes to the [4Fe-4S] cluster binding site. H124 is a (2E)-4-hydroxy-3-methylbut-2-enyl diphosphate binding site. H124 is a dimethylallyl diphosphate binding site. H124 contributes to the isopentenyl diphosphate binding site. E126 serves as the catalytic Proton donor. T167 serves as a coordination point for (2E)-4-hydroxy-3-methylbut-2-enyl diphosphate. [4Fe-4S] cluster is bound at residue C197. (2E)-4-hydroxy-3-methylbut-2-enyl diphosphate is bound by residues S225, S226, N227, and S269. Residues S225, S226, N227, and S269 each coordinate dimethylallyl diphosphate. Isopentenyl diphosphate contacts are provided by S225, S226, N227, and S269.

It belongs to the IspH family. It depends on [4Fe-4S] cluster as a cofactor.

The catalysed reaction is isopentenyl diphosphate + 2 oxidized [2Fe-2S]-[ferredoxin] + H2O = (2E)-4-hydroxy-3-methylbut-2-enyl diphosphate + 2 reduced [2Fe-2S]-[ferredoxin] + 2 H(+). The enzyme catalyses dimethylallyl diphosphate + 2 oxidized [2Fe-2S]-[ferredoxin] + H2O = (2E)-4-hydroxy-3-methylbut-2-enyl diphosphate + 2 reduced [2Fe-2S]-[ferredoxin] + 2 H(+). Its pathway is isoprenoid biosynthesis; dimethylallyl diphosphate biosynthesis; dimethylallyl diphosphate from (2E)-4-hydroxy-3-methylbutenyl diphosphate: step 1/1. The protein operates within isoprenoid biosynthesis; isopentenyl diphosphate biosynthesis via DXP pathway; isopentenyl diphosphate from 1-deoxy-D-xylulose 5-phosphate: step 6/6. Its function is as follows. Catalyzes the conversion of 1-hydroxy-2-methyl-2-(E)-butenyl 4-diphosphate (HMBPP) into a mixture of isopentenyl diphosphate (IPP) and dimethylallyl diphosphate (DMAPP). Acts in the terminal step of the DOXP/MEP pathway for isoprenoid precursor biosynthesis. The chain is 4-hydroxy-3-methylbut-2-enyl diphosphate reductase from Shewanella pealeana (strain ATCC 700345 / ANG-SQ1).